The sequence spans 445 residues: Cyclin-B1-2 (445 aa).

Belongs to the cyclin family. Cyclin AB subfamily. Interacts with FZR2/CCS52A1, FZR1/CCS52A2 and FZR3/CCS52B. Expressed in roots, stems and flowers.

May induce mitotic cell division. This chain is Cyclin-B1-2 (CYCB1-2), found in Arabidopsis thaliana (Mouse-ear cress).